Reading from the N-terminus, the 152-residue chain is Putative superoxide dismutase [Cu-Zn] (152 aa).

Cu cation contacts are provided by His-43, His-45, and His-60. Cys-54 and Cys-144 are joined by a disulfide. Zn(2+)-binding residues include His-60, His-68, His-77, and Asp-80. His-118 contributes to the Cu cation binding site.

The protein belongs to the Cu-Zn superoxide dismutase family. Requires Cu cation as cofactor. Zn(2+) is required as a cofactor.

It carries out the reaction 2 superoxide + 2 H(+) = H2O2 + O2. In terms of biological role, destroys radicals which are normally produced within the cells and which are toxic to biological systems. This Orgyia pseudotsugata (Douglas-fir tussock moth) protein is Putative superoxide dismutase [Cu-Zn] (SOD).